The sequence spans 142 residues: UPF0306 protein Ent638_3591 (142 aa).

This sequence belongs to the UPF0306 family.

The chain is UPF0306 protein Ent638_3591 from Enterobacter sp. (strain 638).